The primary structure comprises 346 residues: Phosphoribosylformylglycinamidine cyclo-ligase (346 aa).

The protein belongs to the AIR synthase family.

Its subcellular location is the cytoplasm. It carries out the reaction 2-formamido-N(1)-(5-O-phospho-beta-D-ribosyl)acetamidine + ATP = 5-amino-1-(5-phospho-beta-D-ribosyl)imidazole + ADP + phosphate + H(+). It functions in the pathway purine metabolism; IMP biosynthesis via de novo pathway; 5-amino-1-(5-phospho-D-ribosyl)imidazole from N(2)-formyl-N(1)-(5-phospho-D-ribosyl)glycinamide: step 2/2. This chain is Phosphoribosylformylglycinamidine cyclo-ligase, found in Synechococcus sp. (strain CC9311).